A 219-amino-acid chain; its full sequence is Orotate phosphoribosyltransferase (219 aa).

K26 serves as a coordination point for 5-phospho-alpha-D-ribose 1-diphosphate. Residue 34–35 participates in orotate binding; that stretch reads FF. 5-phospho-alpha-D-ribose 1-diphosphate is bound by residues 72–73, R98, K99, K102, H104, and 124–132; these read YK and DDVITAGTA. Orotate is bound by residues T128 and R156.

This sequence belongs to the purine/pyrimidine phosphoribosyltransferase family. PyrE subfamily. Homodimer. It depends on Mg(2+) as a cofactor.

It catalyses the reaction orotidine 5'-phosphate + diphosphate = orotate + 5-phospho-alpha-D-ribose 1-diphosphate. Its pathway is pyrimidine metabolism; UMP biosynthesis via de novo pathway; UMP from orotate: step 1/2. Catalyzes the transfer of a ribosyl phosphate group from 5-phosphoribose 1-diphosphate to orotate, leading to the formation of orotidine monophosphate (OMP). This is Orotate phosphoribosyltransferase from Xylella fastidiosa (strain Temecula1 / ATCC 700964).